The primary structure comprises 88 residues: Sec-independent protein translocase protein TatA (88 aa).

Residues methionine 1–glycine 21 form a helical membrane-spanning segment. Residues lysine 41–glycine 88 are disordered. Residues aspartate 46–lysine 56 are compositionally biased toward polar residues. The segment covering lysine 76–glycine 88 has biased composition (basic and acidic residues).

The protein belongs to the TatA/E family. As to quaternary structure, the Tat system comprises two distinct complexes: a TatABC complex, containing multiple copies of TatA, TatB and TatC subunits, and a separate TatA complex, containing only TatA subunits. Substrates initially bind to the TatABC complex, which probably triggers association of the separate TatA complex to form the active translocon.

It is found in the cell inner membrane. Part of the twin-arginine translocation (Tat) system that transports large folded proteins containing a characteristic twin-arginine motif in their signal peptide across membranes. TatA could form the protein-conducting channel of the Tat system. The sequence is that of Sec-independent protein translocase protein TatA from Yersinia pestis.